The chain runs to 401 residues: Argininosuccinate synthase (401 aa).

ATP-binding positions include 11-19 (AYSGGLDTS) and alanine 38. Positions 89 and 94 each coordinate L-citrulline. Residue glycine 119 participates in ATP binding. L-aspartate-binding residues include threonine 121, asparagine 125, and aspartate 126. Position 125 (asparagine 125) interacts with L-citrulline. L-citrulline is bound by residues arginine 129, serine 180, serine 189, glutamate 265, and tyrosine 277.

This sequence belongs to the argininosuccinate synthase family. Type 1 subfamily. As to quaternary structure, homotetramer.

It localises to the cytoplasm. It catalyses the reaction L-citrulline + L-aspartate + ATP = 2-(N(omega)-L-arginino)succinate + AMP + diphosphate + H(+). It functions in the pathway amino-acid biosynthesis; L-arginine biosynthesis; L-arginine from L-ornithine and carbamoyl phosphate: step 2/3. The polypeptide is Argininosuccinate synthase (Syntrophus aciditrophicus (strain SB)).